Reading from the N-terminus, the 841-residue chain is Microcephalin (841 aa).

Residues 1 to 93 form the BRCT 1 domain; the sequence is MAAPILKDVV…AHIDESLFPA (93 aa). Residues serine 278, serine 286, serine 295, and serine 332 each carry the phosphoserine modification. Threonine 334 is subject to Phosphothreonine. Disordered regions lie at residues 340–375, 417–445, 481–507, and 562–593; these read GHLLIHSRPRSSSVKRKRVSYGFHSPPKEKCKRKRS, PDNLKERNSENLPPESQLPSSPAQFSCRS, SSPQKTANGEGRATLSGVTSEESSAPE, and VGLKSTQDKGTTSKISNSSEGEASSEHEPRSV. The span at 342 to 358 shows a compositional bias: basic residues; it reads LLIHSRPRSSSVKRKRV. A compositionally biased stretch (polar residues) spans 433 to 445; it reads QLPSSPAQFSCRS. Polar residues predominate over residues 565–583; the sequence is KSTQDKGTTSKISNSSEGE. BRCT domains follow at residues 646 to 736 and 757 to 839; these read SGKG…SFEL and YRGT…NYLL.

In terms of assembly, interacts with CDC27 and maybe other components of the APC/C complex. Interacts with histone variant H2AX under DNA damage conditions.

It is found in the cytoplasm. The protein resides in the cytoskeleton. It localises to the microtubule organizing center. Its subcellular location is the centrosome. Functionally, implicated in chromosome condensation and DNA damage induced cellular responses. May play a role in neurogenesis and regulation of the size of the cerebral cortex. The sequence is that of Microcephalin from Colobus guereza (Mantled guereza).